The sequence spans 215 residues: Pyrophosphatase PpaX (215 aa).

The active-site Nucleophile is the Asp-9.

It belongs to the HAD-like hydrolase superfamily. PpaX family. It depends on Mg(2+) as a cofactor.

It catalyses the reaction diphosphate + H2O = 2 phosphate + H(+). Its function is as follows. Hydrolyzes pyrophosphate formed during P-Ser-HPr dephosphorylation by HPrK/P. Might play a role in controlling the intracellular pyrophosphate pool. The chain is Pyrophosphatase PpaX from Halalkalibacterium halodurans (strain ATCC BAA-125 / DSM 18197 / FERM 7344 / JCM 9153 / C-125) (Bacillus halodurans).